A 315-amino-acid polypeptide reads, in one-letter code: Acetyl-coenzyme A carboxylase carboxyl transferase subunit alpha (315 aa).

The CoA carboxyltransferase C-terminal domain maps to 40–293 (LQDKSKTLTE…REELSSQLAM (254 aa)).

The protein belongs to the AccA family. Acetyl-CoA carboxylase is a heterohexamer composed of biotin carboxyl carrier protein (AccB), biotin carboxylase (AccC) and two subunits each of ACCase subunit alpha (AccA) and ACCase subunit beta (AccD).

The protein resides in the cytoplasm. The catalysed reaction is N(6)-carboxybiotinyl-L-lysyl-[protein] + acetyl-CoA = N(6)-biotinyl-L-lysyl-[protein] + malonyl-CoA. The protein operates within lipid metabolism; malonyl-CoA biosynthesis; malonyl-CoA from acetyl-CoA: step 1/1. Its function is as follows. Component of the acetyl coenzyme A carboxylase (ACC) complex. First, biotin carboxylase catalyzes the carboxylation of biotin on its carrier protein (BCCP) and then the CO(2) group is transferred by the carboxyltransferase to acetyl-CoA to form malonyl-CoA. This Pseudomonas savastanoi pv. phaseolicola (strain 1448A / Race 6) (Pseudomonas syringae pv. phaseolicola (strain 1448A / Race 6)) protein is Acetyl-coenzyme A carboxylase carboxyl transferase subunit alpha.